The following is a 687-amino-acid chain: DNA-directed RNA polymerase subunit beta' (687 aa).

Zn(2+)-binding residues include Cys-69, Cys-71, Cys-87, and Cys-90. Asp-492, Asp-494, and Asp-496 together coordinate Mg(2+).

The protein belongs to the RNA polymerase beta' chain family. RpoC1 subfamily. As to quaternary structure, in plastids the minimal PEP RNA polymerase catalytic core is composed of four subunits: alpha, beta, beta', and beta''. When a (nuclear-encoded) sigma factor is associated with the core the holoenzyme is formed, which can initiate transcription. Mg(2+) serves as cofactor. Zn(2+) is required as a cofactor.

Its subcellular location is the plastid. The protein localises to the chloroplast. The enzyme catalyses RNA(n) + a ribonucleoside 5'-triphosphate = RNA(n+1) + diphosphate. In terms of biological role, DNA-dependent RNA polymerase catalyzes the transcription of DNA into RNA using the four ribonucleoside triphosphates as substrates. This Silene latifolia (White campion) protein is DNA-directed RNA polymerase subunit beta'.